A 288-amino-acid polypeptide reads, in one-letter code: Large ribosomal subunit protein uL2 (288 aa).

The span at 29–43 shows a compositional bias: basic and acidic residues; the sequence is PEKSLTRGFKRDKGR. Disordered stretches follow at residues 29–59 and 210–288; these read PEKS…GGHK and GRNR…GRQS. Basic residues-rich tracts occupy residues 210–221 and 272–288; these read GRNRWKGRRPKV and VRRR…GRQS.

This sequence belongs to the universal ribosomal protein uL2 family. In terms of assembly, part of the 50S ribosomal subunit. Forms a bridge to the 30S subunit in the 70S ribosome.

One of the primary rRNA binding proteins. Required for association of the 30S and 50S subunits to form the 70S ribosome, for tRNA binding and peptide bond formation. It has been suggested to have peptidyltransferase activity; this is somewhat controversial. Makes several contacts with the 16S rRNA in the 70S ribosome. The chain is Large ribosomal subunit protein uL2 from Thermosynechococcus vestitus (strain NIES-2133 / IAM M-273 / BP-1).